The following is a 911-amino-acid chain: Inositol 1,4,5-triphosphate receptor associated 1 (911 aa).

Residues 1-11 are compositionally biased toward basic and acidic residues; that stretch reads MVKAPQSEERL. Disordered stretches follow at residues 1-21, 39-122, 174-405, and 478-498; these read MVKA…NNSV, EVPG…HRHL, LTRR…GPRL, and EQEK…ESKG. Residues 68–86 are compositionally biased toward polar residues; the sequence is AAQSPAGQDPATTGISCSP. Residues 111–122 show a composition bias toward basic residues; sequence HSPHRRLSHRHL. Ser118 is modified (phosphoserine). The tract at residues 152 to 184 is interaction with PRKG1; it reads SEEDKKKNLALLEEAKLVSERFLTRRGRKSRSS. Polar residues predominate over residues 183 to 212; it reads SSPGESSPAVSPNLSPGASPASSQSNSLTV. The segment covering 277 to 292 has biased composition (basic and acidic residues); the sequence is TVEKSKEITIEQKENF. Ser393 carries the phosphoserine modification. Positions 534-580 are interaction with ITPR1; it reads NVFVQLSLAFRNDSYTLESRINQAERERNLTEENTEKELENFKASIT. The stretch at 547–645 forms a coiled coil; the sequence is SYTLESRINQ…MQYVENLKRT (99 aa). Phosphoserine is present on residues Ser683 and Ser696. 2 disordered regions span residues 706–766 and 787–829; these read LNLP…TPSC and YQEG…KEQR. Positions 708 to 728 are enriched in low complexity; that stretch reads LPGQSPSSSPIPSLPALSESS. Residues 790-801 are compositionally biased toward basic and acidic residues; it reads GLKKTKELQGLR. Over residues 802–825 the composition is skewed to acidic residues; sequence EEEEEQKSESPEEPEEVAETEEEE. Residues 853–873 form a helical membrane-spanning segment; sequence VIWMMAAAMLVLTVVLGLYGS.

Interacts with PRKG1/cGKI-beta and ITPR1/IP3R type I. Part of cGMP kinase signaling complex at least composed of ACTA2/alpha-actin, CNN1/calponin H1, PLN/phospholamban, PRKG1 and ITPR1. Interacts with HCN4; regulates HCN4 channel activity. In terms of processing, phosphorylated by PRKG1/cGKI-beta. Phosphorylation at Ser-696 is necessary for PRKG1-induced calcium release in the cytosol. Highly expressed in trachea, aorta and uterus.

The protein localises to the sarcoplasmic reticulum. Its subcellular location is the cytoplasm. The protein resides in the perinuclear region. It localises to the membrane. Plays a role as NO/PRKG1-dependent regulator of IP3-induced calcium release; its phosphorylation by PRKG1 inhibits bradykinin and IP3-induced calcium release from intracellular stores. Recruits PRKG1 to the endoplasmic reticulum and may mediate the assembly of PRKG1 and ITPR1 in a macrocomplex. Involved in PRKG1 signaling cascade leading to inhibition of platelet activation and aggregation. Also mediates NO-dependent inhibition of calcium signaling in gastrointestinal smooth muscle contributing to NO-dependent relaxation. Plays a role in the regulation of cellular excitability by regulating the hyperpolarization-activated cyclic nucleotide-gated HCN4 channel activity. The protein is Inositol 1,4,5-triphosphate receptor associated 1 (IRAG1) of Bos taurus (Bovine).